The sequence spans 89 residues: Small ribosomal subunit protein uS15 (89 aa).

It belongs to the universal ribosomal protein uS15 family. In terms of assembly, part of the 30S ribosomal subunit. Forms a bridge to the 50S subunit in the 70S ribosome, contacting the 23S rRNA.

Functionally, one of the primary rRNA binding proteins, it binds directly to 16S rRNA where it helps nucleate assembly of the platform of the 30S subunit by binding and bridging several RNA helices of the 16S rRNA. In terms of biological role, forms an intersubunit bridge (bridge B4) with the 23S rRNA of the 50S subunit in the ribosome. The polypeptide is Small ribosomal subunit protein uS15 (Cupriavidus metallidurans (strain ATCC 43123 / DSM 2839 / NBRC 102507 / CH34) (Ralstonia metallidurans)).